The sequence spans 267 residues: Hydroxynaphthalene reductase-like protein Arp2 (267 aa).

NADP(+) contacts are provided by Ile25, Asn45, Asp71, and Asn98. Residues Ser147 and Ser148 each act as proton donor in the active site. 4 residues coordinate NADP(+): Tyr162, Lys166, Val195, and Thr197. Tyr162 serves as the catalytic Proton acceptor. Catalysis depends on Lys166, which acts as the Lowers pKa of active site Tyr.

It belongs to the short-chain dehydrogenases/reductases (SDR) family.

Its function is as follows. Hydroxynaphthalene reductase-like protein; part of the Pks2 gene cluster that mediates the formation of infectious structures (appressoria), enabling these fungi to kill insects faster. The product of the Pks2 gene cluster is different from the one of Pks1 and has still not been identified. In Metarhizium guizhouense (strain ARSEF 977), this protein is Hydroxynaphthalene reductase-like protein Arp2.